A 410-amino-acid chain; its full sequence is Acyl-CoA-binding domain-containing protein 5-B (410 aa).

Positions 12–101 (AQKRFEAAVK…IQLIIETLPV (90 aa)) constitute an ACB domain. Residues 23–32 (IRSLPEDGSY), 43–47 (YSYYK), lysine 69, and tyrosine 88 each bind an acyl-CoA. The span at 119 to 128 (VEDDDDDDDE) shows a compositional bias: acidic residues. 3 disordered regions span residues 119 to 165 (VEDD…LDDY), 221 to 242 (SDDEMDSDSMDKPATPEKGSGV), and 254 to 320 (GANM…DRMD). A coiled-coil region spans residues 326 to 355 (TQITTILSELEDNMQDVLRRLTTLEQLTAS). A transmembrane helix spans residues 382 to 404 (SPFTAVLTVLWPFAVHWLVQFYL).

The protein localises to the membrane. Binds medium- and long-chain acyl-CoA esters. In Danio rerio (Zebrafish), this protein is Acyl-CoA-binding domain-containing protein 5-B (acbd5b).